A 520-amino-acid chain; its full sequence is Trichothecene O-acetyltransferase TRI3 (520 aa).

A disordered region spans residues 1–23 (MGSKLPELPKLSPEKHRWEKSNV). The span at 12-23 (SPEKHRWEKSNV) shows a compositional bias: basic and acidic residues.

The protein belongs to the trichothecene O-acetyltransferase family.

The protein operates within sesquiterpene biosynthesis; trichothecene biosynthesis. Trichothecene O-acetyltransferase; part of the gene cluster that mediates the production of the antimicrobial trichothecene harzianum A (HA) that plays a role in Botrytis cinerea antagonistic activity and plant defense priming. The biosynthesis of harzianum A begins with the cyclization of farnesyl diphosphate to trichodiene and is catalyzed by the trichodiene synthase TRI5. Trichodiene undergoes a series of oxygenations catalyzed by the cytochrome P450 monooxygenase TRI4. TRI4 controls the addition of 3 oxygens at C-2, C-11, and the C-12, C-13-epoxide to form the intermediate isotrichodiol. Isotrichodiol then undergoes a non-enzymatic isomerization and cyclization to form 12,13-epoxytrichothec-9-ene (EPT) which is further converted to trichodermol by the cytochrome P450 monooxygenase TRI11 via C-4 hydroxylation. The last step of HA synthesis is esterification of an octatriendioyl moiety to the C-4 oxygen of trichodermol. The octatriendioyl moiety is probably produced by the polyketide synthase TRI17 and the esterification performed by the trichothecene O-acetyltransferase TRI3. The chain is Trichothecene O-acetyltransferase TRI3 from Trichoderma arundinaceum.